We begin with the raw amino-acid sequence, 443 residues long: Crh-like protein 2 (443 aa).

An N-terminal signal peptide occupies residues 1-20; the sequence is MVRIGSSLLLATLAATTVSA. The region spanning 21–306 is the GH16 domain; it reads ASDPPKCSQD…TVECYDPPSG (286 aa). Cys56 and Cys67 form a disulfide bridge. Glu164 functions as the Nucleophile in the catalytic mechanism. Glu168 acts as the Proton donor in catalysis. Residue Glu168 participates in chitin binding. Residues Asn194 and Asn237 are each glycosylated (N-linked (GlcNAc...) asparagine). 2 residues coordinate chitin: Trp257 and Thr268. N-linked (GlcNAc...) asparagine glycans are attached at residues Asn332 and Asn359. Low complexity-rich tracts occupy residues 350–367 and 378–410; these read ASSSASGSANKTSSSANT and EPGNSHSGSSGSGTSTSDGSGSSTGFSQGSETS. The tract at residues 350 to 420 is disordered; it reads ASSSASGSAN…ASSNKNAAPS (71 aa). A compositionally biased stretch (polar residues) spans 411-420; that stretch reads ASSNKNAAPS. Asn416 carries GPI-like-anchor amidated asparagine lipidation. Residues 417–443 constitute a propeptide, removed in mature form; the sequence is AAPSQNERVLNGSFFAVLVAVVALVTL. A glycan (N-linked (GlcNAc...) asparagine) is linked at Asn427.

The protein belongs to the glycosyl hydrolase 16 family. CRH1 subfamily. Post-translationally, the GPI-like anchor contains a phosphoceramide lipid group. The anchor position has not been determined.

The protein resides in the cell membrane. It is found in the secreted. The protein localises to the cell wall. It catalyses the reaction Random endo-hydrolysis of N-acetyl-beta-D-glucosaminide (1-&gt;4)-beta-linkages in chitin and chitodextrins.. Functionally, dual chitinase/transglycosylase that plays a role in cell wall architecture. Chitinase and transglycosylase activities are coupled. Required for the polysaccharide cross-linking at the septa and the cell wall. More specifically, transfers chitin to 1,6-beta-glucan in the cell wall. This Aspergillus fumigatus (strain ATCC MYA-4609 / CBS 101355 / FGSC A1100 / Af293) (Neosartorya fumigata) protein is Crh-like protein 2.